The primary structure comprises 359 residues: 3-dehydroquinate synthase (359 aa).

NAD(+) contacts are provided by residues 69 to 74, 103 to 107, 127 to 128, K140, and K149; these read DAEDGK, GAVTD, and TT. Residues E182, H244, and H260 each contribute to the Zn(2+) site.

The protein belongs to the sugar phosphate cyclases superfamily. Dehydroquinate synthase family. NAD(+) is required as a cofactor. It depends on Co(2+) as a cofactor. Requires Zn(2+) as cofactor.

The protein resides in the cytoplasm. The catalysed reaction is 7-phospho-2-dehydro-3-deoxy-D-arabino-heptonate = 3-dehydroquinate + phosphate. It functions in the pathway metabolic intermediate biosynthesis; chorismate biosynthesis; chorismate from D-erythrose 4-phosphate and phosphoenolpyruvate: step 2/7. In terms of biological role, catalyzes the conversion of 3-deoxy-D-arabino-heptulosonate 7-phosphate (DAHP) to dehydroquinate (DHQ). This chain is 3-dehydroquinate synthase, found in Corynebacterium pseudotuberculosis (strain C231).